We begin with the raw amino-acid sequence, 408 residues long: G patch domain-containing protein 4 (408 aa).

Position 1 is an N-acetylmethionine (M1). A Phosphothreonine modification is found at T4. Positions 11-57 constitute a G-patch domain; it reads GMKFAEEQLLKHGWTQGKGLGRKENGITQALRVTLKQDTYGVGHDPA. Residue K46 forms a Glycyl lysine isopeptide (Lys-Gly) (interchain with G-Cter in SUMO2) linkage. Position 116 is a phosphothreonine (T116). Disordered regions lie at residues 116–141 and 187–408; these read TSSG…KPPN and GQDP…KKRD. S128 and S130 each carry phosphoserine. Composition is skewed to basic and acidic residues over residues 222-236, 245-257, and 274-283; these read RSAE…ESIR, HQEE…REGT, and LKNREHVDRS. The span at 340-354 shows a compositional bias: acidic residues; the sequence is EEDLNTEDEEVEEAL. Positions 358–372 are enriched in basic and acidic residues; that stretch reads GTREAESRSCSDQKR. A compositionally biased stretch (basic residues) spans 398 to 408; that stretch reads KAKKKKQKKRD.

This is G patch domain-containing protein 4 (GPATCH4) from Bos taurus (Bovine).